Here is a 927-residue protein sequence, read N- to C-terminus: Calmodulin-binding transcription activator CBT (927 aa).

A DNA-binding region (CG-1) is located at residues 26–152; sequence YEKLVAEAAA…YRQTAEENAM (127 aa). A necessary and sufficient for nuclear localization region spans residues 70–96; the sequence is LYDRKVVRNFRKDGHNWKKKKDGRTVQ. The Nuclear localization signal motif lies at 72-79; sequence DRKVVRNF. The stretch at 609-638 is one ANK repeat; that stretch reads SGWTALHWAAYHGRERMVATLLSAGANPSL. IQ domains follow at residues 757–786 and 799–828; these read EIVA…IQSH and MRRQ…SVGI. Residues 826–845 form a calmodulin-binding region; sequence VGIVEKAILRWRKKRKGLRG. A necessary and sufficient for nuclear localization region spans residues 830–851; sequence EKAILRWRKKRKGLRGIASGMP. One can recognise an IQ 3 domain in the interval 882 to 911; it reads FNRSVVRVQALFRSYKAQQEYRRMKIAHEE.

This sequence belongs to the CAMTA family.

It is found in the nucleus. Transcriptional activation activity is strongly reduced by calmodulin. Functionally, transcription activator that binds calmodulin in a calcium-dependent manner in vitro. Binds to the DNA consensus sequence 5'-T[AC]CG[CT]GT[GT][GT][GT][GT]T[GT]CG-3'. In Oryza sativa subsp. japonica (Rice), this protein is Calmodulin-binding transcription activator CBT.